The primary structure comprises 503 residues: Maturase K (503 aa).

It belongs to the intron maturase 2 family. MatK subfamily.

Its subcellular location is the plastid. It is found in the chloroplast. Functionally, usually encoded in the trnK tRNA gene intron. Probably assists in splicing its own and other chloroplast group II introns. The sequence is that of Maturase K from Callistemon polandii (Gold-tipped bottlebrush).